A 292-amino-acid polypeptide reads, in one-letter code: GTP cyclohydrolase FolE2 (292 aa).

The protein belongs to the GTP cyclohydrolase IV family.

The catalysed reaction is GTP + H2O = 7,8-dihydroneopterin 3'-triphosphate + formate + H(+). It participates in cofactor biosynthesis; 7,8-dihydroneopterin triphosphate biosynthesis; 7,8-dihydroneopterin triphosphate from GTP: step 1/1. Its function is as follows. Converts GTP to 7,8-dihydroneopterin triphosphate. The sequence is that of GTP cyclohydrolase FolE2 from Staphylococcus carnosus (strain TM300).